Consider the following 116-residue polypeptide: Large ribosomal subunit protein bL20 (116 aa).

This sequence belongs to the bacterial ribosomal protein bL20 family.

In terms of biological role, binds directly to 23S ribosomal RNA and is necessary for the in vitro assembly process of the 50S ribosomal subunit. It is not involved in the protein synthesizing functions of that subunit. This is Large ribosomal subunit protein bL20 (rplT) from Mycoplasmopsis fermentans (Mycoplasma fermentans).